Consider the following 75-residue polypeptide: ATP synthase subunit c (75 aa).

2 consecutive transmembrane segments (helical) span residues 9–29 (IGAG…GNIW) and 52–72 (IGFA…LILL).

The protein belongs to the ATPase C chain family. In terms of assembly, F-type ATPases have 2 components, F(1) - the catalytic core - and F(0) - the membrane proton channel. F(1) has five subunits: alpha(3), beta(3), gamma(1), delta(1), epsilon(1). F(0) has four main subunits: a(1), b(1), b'(1) and c(10-14). The alpha and beta chains form an alternating ring which encloses part of the gamma chain. F(1) is attached to F(0) by a central stalk formed by the gamma and epsilon chains, while a peripheral stalk is formed by the delta, b and b' chains.

The protein localises to the cell inner membrane. Functionally, f(1)F(0) ATP synthase produces ATP from ADP in the presence of a proton or sodium gradient. F-type ATPases consist of two structural domains, F(1) containing the extramembraneous catalytic core and F(0) containing the membrane proton channel, linked together by a central stalk and a peripheral stalk. During catalysis, ATP synthesis in the catalytic domain of F(1) is coupled via a rotary mechanism of the central stalk subunits to proton translocation. Its function is as follows. Key component of the F(0) channel; it plays a direct role in translocation across the membrane. A homomeric c-ring of between 10-14 subunits forms the central stalk rotor element with the F(1) delta and epsilon subunits. In Rhodospirillum rubrum (strain ATCC 11170 / ATH 1.1.1 / DSM 467 / LMG 4362 / NCIMB 8255 / S1), this protein is ATP synthase subunit c.